A 199-amino-acid chain; its full sequence is Proteasome subunit beta 2 (199 aa).

A propeptide spans 1-6 (removed in mature form; by autocatalysis); the sequence is MEKKTG. Thr-7 functions as the Nucleophile in the catalytic mechanism.

The protein belongs to the peptidase T1B family. As to quaternary structure, the 20S proteasome core is composed of 14 alpha and 14 beta subunits that assemble into four stacked heptameric rings, resulting in a barrel-shaped structure. The two inner rings, each composed of seven catalytic beta subunits, are sandwiched by two outer rings, each composed of seven alpha subunits. The catalytic chamber with the active sites is on the inside of the barrel. Has a gated structure, the ends of the cylinder being occluded by the N-termini of the alpha-subunits. Is capped at one or both ends by the proteasome regulatory ATPase, PAN.

The protein resides in the cytoplasm. It carries out the reaction Cleavage of peptide bonds with very broad specificity.. Its activity is regulated as follows. The formation of the proteasomal ATPase PAN-20S proteasome complex, via the docking of the C-termini of PAN into the intersubunit pockets in the alpha-rings, triggers opening of the gate for substrate entry. Interconversion between the open-gate and close-gate conformations leads to a dynamic regulation of the 20S proteasome proteolysis activity. Its function is as follows. Component of the proteasome core, a large protease complex with broad specificity involved in protein degradation. This chain is Proteasome subunit beta 2, found in Thermococcus kodakarensis (strain ATCC BAA-918 / JCM 12380 / KOD1) (Pyrococcus kodakaraensis (strain KOD1)).